The sequence spans 182 residues: Keratin, ultra high-sulfur matrix protein (182 aa).

Belongs to the KRTAP type 5 family. Cuticle layers of differentiating wool follicles.

Functionally, the keratin products of mammalian epidermal derivatives such as wool and hair consist of microfibrils embedded in a rigid matrix of other proteins. The matrix proteins include the high-sulfur and high-tyrosine keratins, having molecular weights of 6-20 kDa, whereas the microfibrils contain the larger, low-sulfur keratins (40-56 kDa). The polypeptide is Keratin, ultra high-sulfur matrix protein (Ovis aries (Sheep)).